The primary structure comprises 404 residues: Lipase lipl-3 (404 aa).

The signal sequence occupies residues M1 to A20. N65 carries an N-linked (GlcNAc...) asparagine glycan. S168 functions as the Nucleophile in the catalytic mechanism. The N-linked (GlcNAc...) asparagine glycan is linked to N272. Residues D344 and H376 each act as charge relay system in the active site.

The protein belongs to the AB hydrolase superfamily. Lipase family.

It localises to the secreted. Its subcellular location is the lysosome lumen. In terms of biological role, lipase that, together with lipl-1, plays a role in the response to nutrient deprivation by controlling lipid metabolism. Specifically, involved in the breakdown of lipids during lipophagy, a process during which lipids contained in lipid droplets that have been delivered to lysosomes by autophagy are degraded. This Caenorhabditis elegans protein is Lipase lipl-3.